A 370-amino-acid polypeptide reads, in one-letter code: Phosphate-binding protein PstS 3 (370 aa).

Residues 1–22 (MKLNRFGAAVGVLAAGALVLSA) form the signal peptide. Cys-23 is lipidated: N-palmitoyl cysteine. A lipid anchor (S-diacylglycerol cysteine) is attached at Cys-23. Residues 56–58 (STA), Ser-86, Asp-104, and 191–193 (SGT) contribute to the phosphate site.

It belongs to the PstS family. As to quaternary structure, the complex is composed of two ATP-binding proteins (PstB), two transmembrane proteins (PstC and PstA) and a solute-binding protein (PstS).

It localises to the cell membrane. In terms of biological role, part of the ABC transporter complex PstSACB involved in phosphate import. The chain is Phosphate-binding protein PstS 3 (pstS3) from Mycobacterium bovis (strain ATCC BAA-935 / AF2122/97).